A 281-amino-acid polypeptide reads, in one-letter code: 3-hydroxyanthranilate 3,4-dioxygenase (281 aa).

A domain A (catalytic) region spans residues 1–162; sequence MSGVTAIEIP…SNEFKTGKPG (162 aa). Arg45 provides a ligand contact to O2. Fe cation-binding residues include His49, Glu55, and His93. Glu55 lines the substrate pocket. Substrate is bound by residues Arg97 and Glu107. The linker stretch occupies residues 163 to 179; that stretch reads KGTFACNAPYEARWTDL. The interval 180-281 is domain B; that stretch reads PVPINRKEFI…GFAITIRMPA (102 aa).

Belongs to the 3-HAO family. Requires Fe(2+) as cofactor.

It is found in the cytoplasm. The enzyme catalyses 3-hydroxyanthranilate + O2 = (2Z,4Z)-2-amino-3-carboxymuconate 6-semialdehyde. It participates in cofactor biosynthesis; NAD(+) biosynthesis; quinolinate from L-kynurenine: step 3/3. Functionally, catalyzes the oxidative ring opening of 3-hydroxyanthranilate to 2-amino-3-carboxymuconate semialdehyde, which spontaneously cyclizes to quinolinate. This is 3-hydroxyanthranilate 3,4-dioxygenase (haao-1) from Caenorhabditis elegans.